A 162-amino-acid chain; its full sequence is Functional amyloid chaperone FapA (162 aa).

The first 28 residues, 1–28, serve as a signal peptide directing secretion; that stretch reads MSGSSLRIVVPALLVIVGSVPVSLPAHA.

The protein belongs to the FapA family. As to quaternary structure, monomer in solution. Interacts with FapC but not FapB in vitro.

Its subcellular location is the periplasm. Functionally, an intrinsically disordered chaperone for fibril amyloid FapC that guards against fibrillation within the periplasm. Upon overexpression of the endogenous six-gene locus (fapA-fapF), cells form large clumps during liquid growth, make large amounts of biofilm and produce amyloid fibrils. In Pseudomonas aeruginosa (strain ATCC 15692 / DSM 22644 / CIP 104116 / JCM 14847 / LMG 12228 / 1C / PRS 101 / PAO1), this protein is Functional amyloid chaperone FapA.